The primary structure comprises 215 residues: 3,4-dihydroxy-2-butanone 4-phosphate synthase (215 aa).

Residues 38 to 39, D43, 151 to 155, and E175 each bind D-ribulose 5-phosphate; these read RE and RRGHT. A Mg(2+)-binding site is contributed by E39. H154 contributes to the Mg(2+) binding site.

Belongs to the DHBP synthase family. In terms of assembly, homodimer. It depends on Mg(2+) as a cofactor. Requires Mn(2+) as cofactor.

The enzyme catalyses D-ribulose 5-phosphate = (2S)-2-hydroxy-3-oxobutyl phosphate + formate + H(+). It functions in the pathway cofactor biosynthesis; riboflavin biosynthesis; 2-hydroxy-3-oxobutyl phosphate from D-ribulose 5-phosphate: step 1/1. In terms of biological role, catalyzes the conversion of D-ribulose 5-phosphate to formate and 3,4-dihydroxy-2-butanone 4-phosphate. The chain is 3,4-dihydroxy-2-butanone 4-phosphate synthase from Haemophilus influenzae (strain PittEE).